The following is a 533-amino-acid chain: Spindle pole body protein CSA6 (533 aa).

Disordered regions lie at residues 1 to 32 and 53 to 130; these read MEDS…SDLT and DKYD…QEDE. Basic and acidic residues-rich tracts occupy residues 18 to 30 and 53 to 68; these read PEIK…KTSD and DKYD…DLTP. Over residues 83–94 the composition is skewed to low complexity; that stretch reads PSKFSSSIPQKP. A compositionally biased stretch (polar residues) spans 103 to 121; that stretch reads SSPTKNYTDHINQLRSGPN. Positions 136–236 form a coiled coil; the sequence is KYEIKRLKQE…RSERDELVKD (101 aa). Residues 309 to 318 are compositionally biased toward basic and acidic residues; that stretch reads EKDKPSEDKT. Disordered stretches follow at residues 309-329 and 349-453; these read EKDK…SKDA and SANS…QSTK. Composition is skewed to polar residues over residues 349-392 and 405-421; these read SANS…SNSQ and IYSS…QSSH. The segment covering 432 to 445 has biased composition (basic and acidic residues); it reads PRVERDHWTDRPPS.

It localises to the cytoplasm. Its subcellular location is the cytoskeleton. It is found in the microtubule organizing center. The protein localises to the spindle pole body. Plays a role in mitotic spindle pole body organization, possibly at the point of spindle pole body separation. Required for mitotic exit. The chain is Spindle pole body protein CSA6 from Candida dubliniensis (strain CD36 / ATCC MYA-646 / CBS 7987 / NCPF 3949 / NRRL Y-17841) (Yeast).